A 164-amino-acid polypeptide reads, in one-letter code: S-ribosylhomocysteine lyase (164 aa).

Positions 54, 58, and 128 each coordinate Fe cation.

The protein belongs to the LuxS family. As to quaternary structure, homodimer. Fe cation serves as cofactor.

The catalysed reaction is S-(5-deoxy-D-ribos-5-yl)-L-homocysteine = (S)-4,5-dihydroxypentane-2,3-dione + L-homocysteine. Involved in the synthesis of autoinducer 2 (AI-2) which is secreted by bacteria and is used to communicate both the cell density and the metabolic potential of the environment. The regulation of gene expression in response to changes in cell density is called quorum sensing. Catalyzes the transformation of S-ribosylhomocysteine (RHC) to homocysteine (HC) and 4,5-dihydroxy-2,3-pentadione (DPD). The chain is S-ribosylhomocysteine lyase from Campylobacter jejuni subsp. jejuni serotype O:23/36 (strain 81-176).